The chain runs to 397 residues: UDP-galactose translocator (397 aa).

The interval 1–21 is disordered; that stretch reads MAAVGSGGSNAAAGPGAVSAG. The next 10 helical transmembrane spans lie at 3-23, 37-57, 65-85, 97-117, 140-160, 169-189, 200-220, 238-258, 269-289, and 315-335; these read AVGS…AGSL, YISL…IRYA, FFAT…CLLL, LALF…KLAV, TFQV…VLML, WASL…QAGG, GAGL…GVYF, LGLF…GTAV, PAVW…AVVV, and LFGF…IGAV. Residues 9–21 are compositionally biased toward low complexity; the sequence is SNAAAGPGAVSAG. Residues 355–397 form a disordered region; that stretch reads ASASTSGPCTHQQPPGQPPPPKLSSHRADLSTEPFLPKSVLVK.

This sequence belongs to the nucleotide-sugar transporter family. SLC35A subfamily. In terms of assembly, interacts with SLC35A3; the interaction is reduced in the presence of SLC35A4. Found in a complex with SLC35A3 and SLC35A4.

It localises to the golgi apparatus membrane. The catalysed reaction is UMP(out) + UDP-alpha-D-galactose(in) = UMP(in) + UDP-alpha-D-galactose(out). The enzyme catalyses UDP-N-acetyl-alpha-D-galactosamine(in) + UMP(out) = UDP-N-acetyl-alpha-D-galactosamine(out) + UMP(in). It carries out the reaction UMP(out) + UDP-alpha-D-glucose(in) = UMP(in) + UDP-alpha-D-glucose(out). It catalyses the reaction UMP(out) + UDP-N-acetyl-alpha-D-glucosamine(in) = UMP(in) + UDP-N-acetyl-alpha-D-glucosamine(out). The catalysed reaction is UDP-alpha-D-galactose(in) + AMP(out) = UDP-alpha-D-galactose(out) + AMP(in). The enzyme catalyses UDP-alpha-D-galactose(in) + CMP(out) = UDP-alpha-D-galactose(out) + CMP(in). It carries out the reaction UDP-N-acetyl-alpha-D-galactosamine(out) + UDP-alpha-D-galactose(in) = UDP-N-acetyl-alpha-D-galactosamine(in) + UDP-alpha-D-galactose(out). It catalyses the reaction UDP-N-acetyl-alpha-D-glucosamine(out) + UDP-alpha-D-galactose(in) = UDP-N-acetyl-alpha-D-glucosamine(in) + UDP-alpha-D-galactose(out). The catalysed reaction is UDP-alpha-D-galactose(in) + UDP-alpha-D-glucose(out) = UDP-alpha-D-galactose(out) + UDP-alpha-D-glucose(in). The enzyme catalyses UMP(out) + CMP(in) = UMP(in) + CMP(out). It carries out the reaction UMP(out) + AMP(in) = UMP(in) + AMP(out). Functionally, transports uridine diphosphate galactose (UDP-galactose) from the cytosol into the Golgi apparatus, functioning as an antiporter that exchanges UDP-galactose for UMP. It is also able to exchange UDP-galactose for AMP and CMP, and to transport UDP-N-acetylgalactosamine (UDP-GalNAc) and other nucleotide sugars. As a provider of UDP-galactose to galactosyltransferases present in the Golgi apparatus, it is necessary for globotriaosylceramide/globoside (Gb3Cer) synthesis from lactosylceramide. The polypeptide is UDP-galactose translocator (Canis lupus familiaris (Dog)).